The sequence spans 378 residues: Glutamate 5-kinase 1 (378 aa).

Position 13 (Lys13) interacts with ATP. 3 residues coordinate substrate: Ser53, Asp140, and Asn152. Residue 172–173 (SD) participates in ATP binding. Residues 278–355 (AGRLTVDAGA…AEIETVLGYE (78 aa)) enclose the PUA domain.

Belongs to the glutamate 5-kinase family.

It is found in the cytoplasm. It carries out the reaction L-glutamate + ATP = L-glutamyl 5-phosphate + ADP. Its pathway is amino-acid biosynthesis; L-proline biosynthesis; L-glutamate 5-semialdehyde from L-glutamate: step 1/2. Catalyzes the transfer of a phosphate group to glutamate to form L-glutamate 5-phosphate. The sequence is that of Glutamate 5-kinase 1 from Mesorhizobium japonicum (strain LMG 29417 / CECT 9101 / MAFF 303099) (Mesorhizobium loti (strain MAFF 303099)).